We begin with the raw amino-acid sequence, 121 residues long: Large ribosomal subunit protein uL18 (121 aa).

Belongs to the universal ribosomal protein uL18 family. In terms of assembly, part of the 50S ribosomal subunit; part of the 5S rRNA/L5/L18/L25 subcomplex. Contacts the 5S and 23S rRNAs.

Its function is as follows. This is one of the proteins that bind and probably mediate the attachment of the 5S RNA into the large ribosomal subunit, where it forms part of the central protuberance. This is Large ribosomal subunit protein uL18 from Delftia acidovorans (strain DSM 14801 / SPH-1).